A 450-amino-acid chain; its full sequence is Gastrin/cholecystokinin type B receptor (450 aa).

At 1 to 57 the chain is on the extracellular side; the sequence is MELLKLNSSVQGPGPGSGSSLCHPGVSLLNSSSAGNLSCEPPRIRGTGTRELELAIR. 3 N-linked (GlcNAc...) asparagine glycosylation sites follow: Asn-7, Asn-30, and Asn-36. A helical transmembrane segment spans residues 58-79; it reads ITLYAVIFLMSIGGNMLIIVVL. Residues 80-87 are Cytoplasmic-facing; sequence GLSRRLRT. A helical membrane pass occupies residues 88-109; that stretch reads VTNAFLLSLAVSDLLLAVACMP. Residues 110-131 lie on the Extracellular side of the membrane; the sequence is FTLLPNLMGTFIFGTVICKAVS. A disulfide bridge connects residues Cys-127 and Cys-205. Residues 132-150 form a helical membrane-spanning segment; sequence YLMGVSVSVSTLNLVAIAL. Residues 151–170 lie on the Cytoplasmic side of the membrane; the sequence is ERYSAICRPLQARVWQTRSH. The chain crosses the membrane as a helical span at residues 171–189; the sequence is AARVILATWLLSGLLMVPY. The Extracellular portion of the chain corresponds to 190–219; that stretch reads PVYTVVQPVGPRVLQCMHRWPSARVRQTWS. Residues 220–242 form a helical membrane-spanning segment; the sequence is VLLLMLLFFIPGVVMAVAYGLIS. Residues 243–336 lie on the Cytoplasmic side of the membrane; the sequence is RELYLGLRFD…KLLAKKRVVR (94 aa). A disordered region spans residues 258 to 277; the sequence is DTQSRVRNQGGLPGGTAPGP. Residues 337–358 form a helical membrane-spanning segment; that stretch reads MLLVIVLLFFLCWLPIYSANTW. At 359–376 the chain is on the extracellular side; it reads CAFDGPGAHRALSGAPIS. The helical transmembrane segment at 377–397 threads the bilayer; that stretch reads FIHLLSYASACVNPLVYCFMH. At 398 to 450 the chain is on the cytoplasmic side; it reads RRFRQACLDTCARCCPRPPRARPRPLPDEDPPTPSIASLSRLSYTTISTLGPG. A lipid anchor (S-palmitoyl cysteine) is attached at Cys-411.

This sequence belongs to the G-protein coupled receptor 1 family. In terms of tissue distribution, stomach and brain.

The protein localises to the cell membrane. Its function is as follows. Receptor for gastrin and cholecystokinin. The CCK-B receptors occur throughout the central nervous system where they modulate anxiety, analgesia, arousal, and neuroleptic activity. This receptor mediates its action by association with G proteins that activate a phosphatidylinositol-calcium second messenger system. This is Gastrin/cholecystokinin type B receptor (CCKBR) from Mastomys natalensis (African soft-furred rat).